Here is a 156-residue protein sequence, read N- to C-terminus: V-type sodium ATPase subunit K (156 aa).

Helical transmembrane passes span 11–31, 60–80, 89–109, and 132–152; these read GMVF…IGSA, LLPG…FINL, GLNF…SGIA, and IIFA…SFLL.

Belongs to the V-ATPase proteolipid subunit family. Post-translationally, the N-terminus is blocked.

The protein localises to the cell membrane. Its function is as follows. Involved in ATP-driven sodium extrusion. This is V-type sodium ATPase subunit K (ntpK) from Enterococcus hirae (strain ATCC 9790 / DSM 20160 / JCM 8729 / LMG 6399 / NBRC 3181 / NCIMB 6459 / NCDO 1258 / NCTC 12367 / WDCM 00089 / R).